Reading from the N-terminus, the 712-residue chain is Sesterterpene synthase btcA (712 aa).

Positions 1–332 are terpene cyclase; sequence MTTIWEHCVD…CANCPRHHAW (332 aa). Asp96 contributes to the Mg(2+) binding site. Substrate is bound by residues Asp96, Asn234, 238–242, and 328–329; these read SWDRE and RH. The short motif at 96–100 is the DDXXD 1 element; the sequence is DDLCD. An NSE/DTE motif is present at residues 234 to 242; sequence NDYWSWDRE. The interval 333 to 706 is prenyltransferase; that stretch reads RDEESSPSER…VMRIVLSRLS (374 aa). The tract at residues 334–373 is disordered; it reads DEESSPSERSFSPSNEGIEDPRLSPGASTTSSMSQKSSPA. Low complexity-rich tracts occupy residues 340-349 and 361-373; these read SERSFSPSNE and STTS…SSPA. Isopentenyl diphosphate-binding residues include Lys414, Arg417, and His446. Mg(2+) contacts are provided by Asp453 and Asp457. The DDXXD 2 signature appears at 453 to 457; the sequence is DDIED. Position 462 (Arg462) interacts with dimethylallyl diphosphate. Arg463 serves as a coordination point for isopentenyl diphosphate. Dimethylallyl diphosphate is bound by residues Lys540, Thr541, Gln580, Asn587, Lys597, and Lys607.

In the N-terminal section; belongs to the terpene synthase family. This sequence in the C-terminal section; belongs to the FPP/GGPP synthase family. As to quaternary structure, hexamer. The cofactor is Mg(2+).

It catalyses the reaction isopentenyl diphosphate + (2E,6E)-farnesyl diphosphate = (2E,6E,10E)-geranylgeranyl diphosphate + diphosphate. The enzyme catalyses isopentenyl diphosphate + (2E,6E,10E)-geranylgeranyl diphosphate = (2E,6E,10E,14E)-geranylfarnesyl diphosphate + diphosphate. It participates in secondary metabolite biosynthesis; terpenoid biosynthesis. Functionally, bifunctional terpene synthase; part of the gene cluster that mediates the biosynthesis of betaestacins. The bifunctional terpene synthase btcA converts isopentenyl diphosphate (IPP) and dimethylallyl diphosphate (DMAPP) into the sesterterpene betaestacin I. The C-terminal prenyltransferase (PT) domain of btcA catalyzes formation of GFPP, whereas the N-terminal terpene cyclase (TC) domain catalyzes the cyclization of GFPP into betaestacin I. The cytochrome P450 monooxygenase btcB oxidizes the C25 methyl group of betaestacin I to yield the carboxylic acid betaestacin IV via the alcohol betaestacin III. The cytochrome P450 monooxygenase btcC further catalyzes the multistep oxidation of betaestacin IV to produce several compounds, including betaestacins Va, Vb, Vc and VI. This chain is Sesterterpene synthase btcA, found in Colletotrichum orbiculare (strain 104-T / ATCC 96160 / CBS 514.97 / LARS 414 / MAFF 240422) (Cucumber anthracnose fungus).